Reading from the N-terminus, the 156-residue chain is D-aminoacyl-tRNA deacylase (156 aa).

A Gly-cisPro motif, important for rejection of L-amino acids motif is present at residues 142 to 143 (GP).

This sequence belongs to the DTD family. In terms of assembly, homodimer.

The protein localises to the cytoplasm. The enzyme catalyses glycyl-tRNA(Ala) + H2O = tRNA(Ala) + glycine + H(+). The catalysed reaction is a D-aminoacyl-tRNA + H2O = a tRNA + a D-alpha-amino acid + H(+). Its function is as follows. An aminoacyl-tRNA editing enzyme that deacylates mischarged D-aminoacyl-tRNAs. Also deacylates mischarged glycyl-tRNA(Ala), protecting cells against glycine mischarging by AlaRS. Acts via tRNA-based rather than protein-based catalysis; rejects L-amino acids rather than detecting D-amino acids in the active site. By recycling D-aminoacyl-tRNA to D-amino acids and free tRNA molecules, this enzyme counteracts the toxicity associated with the formation of D-aminoacyl-tRNA entities in vivo and helps enforce protein L-homochirality. In Delftia acidovorans (strain DSM 14801 / SPH-1), this protein is D-aminoacyl-tRNA deacylase.